Reading from the N-terminus, the 5043-residue chain is Polyketide synthase PksJ (5043 aa).

Residues 141–481 form an adenylation 1 region; that stretch reads AVITDRGMHQ…ELPEIETSYT (341 aa). Residues 590-667 form the Carrier 1 domain; sequence RVREEIQKHL…RLASYLSEHE (78 aa). Residue Ser627 is modified to O-(pantetheine 4'-phosphoryl)serine. Residues 690–989 are condensation; that stretch reads QATFQPLSEV…NMLPIRSELN (300 aa). The interval 1181 to 1578 is adenylation 2; the sequence is TYRELDEKST…EHPGILECVV (398 aa). The 76-residue stretch at 1654–1729 folds into the Carrier 2 domain; the sequence is TSPKNIQDTV…NISQYITEQR (76 aa). Position 1689 is an O-(pantetheine 4'-phosphoryl)serine (Ser1689). The 427-residue stretch at 1760-2186 folds into the Ketosynthase family 3 (KS3) 1 domain; that stretch reads DDSVAIIGIS…GTNTHAIFEQ (427 aa). Catalysis depends on for beta-ketoacyl synthase 1 activity residues Cys1932, His2068, and His2108. The segment at 2374–2499 is N-terminal hotdog fold; the sequence is HPLLHQNTSD…GSAELASAAE (126 aa). Residues 2374 to 2661 form the PKS/mFAS DH domain; sequence HPLLHQNTSD…TRVLEGEVHT (288 aa). Catalysis depends on His2403, which acts as the Proton acceptor; for dehydratase activity. The C-terminal hotdog fold stretch occupies residues 2513-2661; that stretch reads GKGKMSPDQF…TRVLEGEVHT (149 aa). Asp2575 functions as the Proton donor; for dehydratase activity in the catalytic mechanism. Carrier domains are found at residues 3114 to 3188 and 3212 to 3286; these read RKLE…VAAY and SSLE…TVEH. 2 positions are modified to O-(pantetheine 4'-phosphoryl)serine: Ser3148 and Ser3246. A disordered region spans residues 3291 to 3314; the sequence is VQEREKPEGQEELQTKSSEAPKIT. A Ketosynthase family 3 (KS3) 2 domain is found at 3339-3779; the sequence is FEPVAIVGIS…GVNAHIVIEE (441 aa). Residues Cys3511, His3646, and His3695 each act as for beta-ketoacyl synthase 2 activity in the active site. Positions 3839–3872 form a coiled coil; sequence REEMDERLACVAGTMQELEEKLQAFVDGKEETDE. The 78-residue stretch at 4459–4536 folds into the Carrier 5 domain; it reads GLLSETQSWL…RFADWLIGSY (78 aa). Ser4496 is subject to O-(pantetheine 4'-phosphoryl)serine. The region spanning 4588 to 4992 is the Ketosynthase family 3 (KS3) 3 domain; sequence AEGIAVVGLS…GTNAHVIVEA (405 aa). Cys4743 acts as the For beta-ketoacyl synthase 3 activity in catalysis.

It belongs to the ATP-dependent AMP-binding enzyme family. Requires pantetheine 4'-phosphate as cofactor.

It is found in the cytoplasm. It functions in the pathway antibiotic biosynthesis; bacillaene biosynthesis. Functionally, involved in some intermediate steps for the synthesis of the antibiotic polyketide bacillaene which is involved in secondary metabolism. This is Polyketide synthase PksJ (pksJ) from Bacillus subtilis (strain 168).